The primary structure comprises 204 residues: Dephospho-CoA kinase (204 aa).

The DPCK domain maps to 3-200; the sequence is VVAITGGIGS…ETYMAFASQQ (198 aa). 11–16 serves as a coordination point for ATP; it reads GSGKTT.

It belongs to the CoaE family.

It is found in the cytoplasm. The catalysed reaction is 3'-dephospho-CoA + ATP = ADP + CoA + H(+). Its pathway is cofactor biosynthesis; coenzyme A biosynthesis; CoA from (R)-pantothenate: step 5/5. In terms of biological role, catalyzes the phosphorylation of the 3'-hydroxyl group of dephosphocoenzyme A to form coenzyme A. This is Dephospho-CoA kinase from Aeromonas hydrophila.